The following is a 316-amino-acid chain: Malate dehydrogenase 2 (316 aa).

NAD(+)-binding positions include 10–15 (GGGQIG) and Asp-34. Residues Arg-83 and Arg-89 each contribute to the substrate site. Residues Asn-96 and 119-121 (ISN) each bind NAD(+). Residues Asn-121 and Arg-152 each coordinate substrate. His-176 (proton acceptor) is an active-site residue.

The protein belongs to the LDH/MDH superfamily. MDH type 3 family.

It carries out the reaction (S)-malate + NAD(+) = oxaloacetate + NADH + H(+). Its function is as follows. Catalyzes the reversible oxidation of malate to oxaloacetate. This chain is Malate dehydrogenase 2, found in Anaeromyxobacter dehalogenans (strain 2CP-C).